A 134-amino-acid polypeptide reads, in one-letter code: MTKDQNGTWEMESNENFEGYMKALDIDFATRKIAVRLTQTKIIVQDGDNFKTKTNSTFRNYDLDFTVGVEFDEHTKGLDGRNVKTLVTWEGNTLVCVQKGEKENRGWKQWVEGDKLYLELTCGDQVCRQVFKKK.

Lys41 and Gln109 together coordinate all-trans-retinol.

This sequence belongs to the calycin superfamily. Fatty-acid binding protein (FABP) family.

It localises to the cytoplasm. In terms of biological role, intracellular transport of retinol. This chain is Retinol-binding protein 2 (Rbp2), found in Rattus norvegicus (Rat).